The primary structure comprises 157 residues: Cytochrome c-type biogenesis protein CcmE (157 aa).

At 1-8 (MHPVRKQR) the chain is on the cytoplasmic side. The helical; Signal-anchor for type II membrane protein transmembrane segment at 9–29 (LMTVLFIVIASSVAVGLMVFA) threads the bilayer. Residues 30 to 157 (LSKNLNLFYP…KTCEGLDYAS (128 aa)) are Periplasmic-facing. Heme contacts are provided by His124 and Tyr128.

This sequence belongs to the CcmE/CycJ family.

It is found in the cell inner membrane. Functionally, heme chaperone required for the biogenesis of c-type cytochromes. Transiently binds heme delivered by CcmC and transfers the heme to apo-cytochromes in a process facilitated by CcmF and CcmH. The chain is Cytochrome c-type biogenesis protein CcmE from Saccharophagus degradans (strain 2-40 / ATCC 43961 / DSM 17024).